The following is a 361-amino-acid chain: Elongator complex protein 4 (361 aa).

Disordered regions lie at residues 93-124 (QLPGDSDRPNKNENSAGEDNHSSPPSKNPQQE) and 338-361 (DDEQKDTKISNTNPQKQPVKSLDF). Polar residues-rich tracts occupy residues 104–121 (NENSAGEDNHSSPPSKNP) and 346–355 (ISNTNPQKQP).

The protein belongs to the ELP4 family. Component of the elongator complex.

Its subcellular location is the cytoplasm. The protein localises to the nucleus. The protein operates within tRNA modification; 5-methoxycarbonylmethyl-2-thiouridine-tRNA biosynthesis. Its function is as follows. Component of the elongator complex, a multiprotein complex which is required for multiple tRNA modifications, including mcm5U (5-methoxycarbonylmethyl uridine), mcm5s2U (5-methoxycarbonylmethyl-2-thiouridine), and ncm5U (5-carbamoylmethyl uridine). The elongator complex catalyzes formation of carboxymethyluridine in the wobble base at position 34 in tRNAs. This is Elongator complex protein 4 from Schizosaccharomyces pombe (strain 972 / ATCC 24843) (Fission yeast).